A 223-amino-acid chain; its full sequence is von Willebrand factor C domain-containing protein 2-like (223 aa).

Residues 1-21 form the signal peptide; that stretch reads MGPFLPAICVVLLALNAAVSP. VWFC domains lie at 51–110 and 114–172; these read KGCV…PECK and NFCE…PICK.

It localises to the secreted. The protein localises to the synapse. In terms of biological role, may play a role in bone differentiation and matrix mineralization. May play a role in neural development. This is von Willebrand factor C domain-containing protein 2-like (vwc2l) from Danio rerio (Zebrafish).